A 224-amino-acid chain; its full sequence is Probable GTP-binding protein EngB (224 aa).

An EngB-type G domain is found at 27-201 (SGIEVAFAGR…DAIICQWLEQ (175 aa)). GTP is bound by residues 35 to 42 (GRSNAGKS), 62 to 66 (GRTQL), 80 to 83 (DLPG), 147 to 150 (TKCD), and 180 to 182 (FSS). Mg(2+) is bound by residues Ser42 and Thr64. A disordered region spans residues 205 to 224 (EYELPEEDDFDDSDEFTEEE).

This sequence belongs to the TRAFAC class TrmE-Era-EngA-EngB-Septin-like GTPase superfamily. EngB GTPase family. Mg(2+) is required as a cofactor.

In terms of biological role, necessary for normal cell division and for the maintenance of normal septation. The polypeptide is Probable GTP-binding protein EngB (Colwellia psychrerythraea (strain 34H / ATCC BAA-681) (Vibrio psychroerythus)).